We begin with the raw amino-acid sequence, 340 residues long: Nicotianamine synthase 9 (340 aa).

The protein belongs to the nicotianamine synthase (NAS)-like family. As to quaternary structure, homotrimer.

The catalysed reaction is 3 S-adenosyl-L-methionine = nicotianamine + 3 S-methyl-5'-thioadenosine + 3 H(+). Synthesizes nicotianamine, a polyamine that is the first intermediate in the synthesis of the phytosiderophores of the mugineic acid type found in gramineae which serves as a sensor for the physiological iron status within the plant, and/or might be involved in the transport of iron. In Hordeum vulgare (Barley), this protein is Nicotianamine synthase 9 (NAS9).